An 892-amino-acid chain; its full sequence is Alpha-actinin-1 (892 aa).

Position 1 is an N-acetylmethionine (Met-1). Residues 1-247 (MDHYDSQQTN…IMTYVSSFYH (247 aa)) form an actin-binding region. Position 6 is a phosphoserine (Ser-6). Tyr-12 is modified (phosphotyrosine; by FAK1). Calponin-homology (CH) domains are found at residues 31–135 (KQQR…LRFA) and 144–250 (TSAK…HAFS). An N6-acetyllysine mark is found at Lys-95 and Lys-195. Spectrin repeat units follow at residues 274–384 (QLME…WLLN), 394–499 (HLAE…ALER), 509–620 (QLYL…ALTE), and 630–733 (RLRK…EVEN). Positions 274 to 733 (QLMEDYEKLA…IARTINEVEN (460 aa)) are interaction with DDN. Ser-471 bears the Phosphoserine mark. At Lys-676 the chain carries N6-acetyllysine. Position 677 is a phosphoserine (Ser-677). 2 consecutive EF-hand domains span residues 746 to 781 (EQMNEFRASFNHFDRDHSGTLGPEEFKACLISLGYD) and 787 to 822 (QGEAEFARIMSIVDPNRLGVVTFQAFIDFMSRETAD). Residues Asp-759, Asp-761, Ser-763, Thr-765, and Glu-770 each contribute to the Ca(2+) site. The residue at position 890 (Ser-890) is a Phosphoserine.

This sequence belongs to the alpha-actinin family. In terms of assembly, homodimer; antiparallel. Interacts with MYOZ2, TTID and LPP. Interacts with DDN. Interacts with PSD. Interacts with MICALL2. Interacts with DNM2 and CTTN. Interacts with PDLIM1. Interacts with PDLIM2. Interacts with PDLIM4 (via PDZ domain). Interacts with IGSF8.

It is found in the cytoplasm. Its subcellular location is the cytoskeleton. It localises to the myofibril. The protein localises to the sarcomere. The protein resides in the z line. It is found in the cell membrane. Its subcellular location is the cell junction. It localises to the cell projection. The protein localises to the ruffle. Its function is as follows. F-actin cross-linking protein which is thought to anchor actin to a variety of intracellular structures. Association with IGSF8 regulates the immune synapse formation and is required for efficient T-cell activation. This Rattus norvegicus (Rat) protein is Alpha-actinin-1 (Actn1).